We begin with the raw amino-acid sequence, 126 residues long: Histone H2B type 1-J (126 aa).

Positions 1-12 are enriched in low complexity; it reads MPEPAKSAPAPK. Positions 1-35 are disordered; the sequence is MPEPAKSAPAPKKGSKKAVTKAQKKDGKKRKRSRK. An N-acetylproline modification is found at Pro2. Glu3 is modified (ADP-ribosyl glutamic acid). Position 6 is an N6-(2-hydroxyisobutyryl)lysine; alternate (Lys6). Residue Lys6 is modified to N6-(beta-hydroxybutyryl)lysine; alternate. The residue at position 6 (Lys6) is an N6-acetyllysine; alternate. At Lys6 the chain carries N6-butyryllysine; alternate. Lys6 carries the post-translational modification N6-crotonyllysine; alternate. Lys6 is subject to N6-lactoyllysine; alternate. Lys6 is covalently cross-linked (Glycyl lysine isopeptide (Lys-Gly) (interchain with G-Cter in SUMO2); alternate). Ser7 is modified (ADP-ribosylserine). Lys12 is modified (N6-(beta-hydroxybutyryl)lysine; alternate). Residues Lys12 and Lys13 each carry the N6-acetyllysine; alternate modification. N6-crotonyllysine; alternate occurs at positions 12 and 13. Lys12 carries the post-translational modification N6-lactoyllysine; alternate. Lys13 carries the post-translational modification N6-(2-hydroxyisobutyryl)lysine; alternate. Ser15 carries the post-translational modification Phosphoserine; by STK4/MST1. Lys16, Lys17, Lys21, and Lys24 each carry N6-acetyllysine; alternate. N6-crotonyllysine; alternate is present on residues Lys16, Lys17, Lys21, and Lys24. N6-lactoyllysine; alternate occurs at positions 16, 17, 21, and 24. An N6-(beta-hydroxybutyryl)lysine; alternate mark is found at Lys17 and Lys21. Lys17 bears the N6-glutaryllysine; alternate mark. An N6-(2-hydroxyisobutyryl)lysine; alternate mark is found at Lys21 and Lys24. The residue at position 21 (Lys21) is an N6-butyryllysine; alternate. Lys21 participates in a covalent cross-link: Glycyl lysine isopeptide (Lys-Gly) (interchain with G-Cter in SUMO2); alternate. An N6-(2-hydroxyisobutyryl)lysine modification is found at Lys25. An N6-(2-hydroxyisobutyryl)lysine; alternate modification is found at Lys35. Position 35 is an N6-(beta-hydroxybutyryl)lysine; alternate (Lys35). Residue Lys35 is modified to N6-crotonyllysine; alternate. Residue Lys35 is modified to N6-glutaryllysine; alternate. Lys35 is subject to N6-succinyllysine; alternate. Residue Lys35 forms a Glycyl lysine isopeptide (Lys-Gly) (interchain with G-Cter in ubiquitin); alternate linkage. PolyADP-ribosyl glutamic acid is present on Glu36. Ser37 carries the post-translational modification Phosphoserine; by AMPK. 3 positions are modified to N6-(2-hydroxyisobutyryl)lysine; alternate: Lys44, Lys47, and Lys58. The residue at position 44 (Lys44) is an N6-lactoyllysine; alternate. An N6-glutaryllysine; alternate mark is found at Lys44 and Lys47. Lys47 bears the N6-methyllysine; alternate mark. At Lys58 the chain carries N6,N6-dimethyllysine; alternate. A Dimethylated arginine modification is found at Arg80. At Lys86 the chain carries N6-(2-hydroxyisobutyryl)lysine; alternate. Lys86 is subject to N6-(beta-hydroxybutyryl)lysine; alternate. N6-acetyllysine; alternate is present on Lys86. Lys86 bears the N6-lactoyllysine; alternate mark. Position 86 is an N6,N6,N6-trimethyllysine; alternate (Lys86). Residues Arg87 and Arg93 each carry the omega-N-methylarginine modification. Lys109 carries the post-translational modification N6-(2-hydroxyisobutyryl)lysine; alternate. The residue at position 109 (Lys109) is an N6-lactoyllysine; alternate. N6-glutaryllysine; alternate is present on Lys109. Lys109 is subject to N6-methyllysine; alternate. The O-linked (GlcNAc) serine glycan is linked to Ser113. A Phosphothreonine modification is found at Thr116. N6-(2-hydroxyisobutyryl)lysine; alternate is present on residues Lys117 and Lys121. Residues Lys117 and Lys121 each carry the N6-(beta-hydroxybutyryl)lysine; alternate modification. Residues Lys117 and Lys121 each carry the N6-lactoyllysine; alternate modification. Lys117 and Lys121 each carry N6-glutaryllysine; alternate. An N6-succinyllysine; alternate mark is found at Lys117 and Lys121. Lys117 carries the post-translational modification N6-malonyllysine; alternate. An N6-methylated lysine; alternate modification is found at Lys117. Lys121 participates in a covalent cross-link: Glycyl lysine isopeptide (Lys-Gly) (interchain with G-Cter in ubiquitin); alternate.

This sequence belongs to the histone H2B family. The nucleosome is a histone octamer containing two molecules each of H2A, H2B, H3 and H4 assembled in one H3-H4 heterotetramer and two H2A-H2B heterodimers. The octamer wraps approximately 147 bp of DNA. Heterodimer H2BC11 and H2AZ1 interacts with VPS72 (via N-terminal domain). In terms of processing, monoubiquitination at Lys-35 (H2BK34Ub) by the MSL1/MSL2 dimer is required for histone H3 'Lys-4' (H3K4me) and 'Lys-79' (H3K79me) methylation and transcription activation at specific gene loci, such as HOXA9 and MEIS1 loci. Similarly, monoubiquitination at Lys-121 (H2BK120Ub) by the RNF20/40 complex gives a specific tag for epigenetic transcriptional activation and is also prerequisite for histone H3 'Lys-4' and 'Lys-79' methylation. It also functions cooperatively with the FACT dimer to stimulate elongation by RNA polymerase II. H2BK120Ub also acts as a regulator of mRNA splicing: deubiquitination by USP49 is required for efficient cotranscriptional splicing of a large set of exons. Post-translationally, phosphorylation at Ser-37 (H2BS36ph) by AMPK in response to stress promotes transcription. Phosphorylated on Ser-15 (H2BS14ph) by STK4/MST1 during apoptosis; which facilitates apoptotic chromatin condensation. Also phosphorylated on Ser-15 in response to DNA double strand breaks (DSBs), and in correlation with somatic hypermutation and immunoglobulin class-switch recombination. GlcNAcylation at Ser-113 promotes monoubiquitination of Lys-121. It fluctuates in response to extracellular glucose, and associates with transcribed genes. In terms of processing, ADP-ribosylated by PARP1 or PARP2 on Ser-7 (H2BS6ADPr) in response to DNA damage. H2BS6ADPr promotes recruitment of CHD1L. Mono-ADP-ribosylated on Glu-3 (H2BE2ADPr) by PARP3 in response to single-strand breaks. Poly ADP-ribosylation on Glu-36 (H2BE35ADPr) by PARP1 regulates adipogenesis: it inhibits phosphorylation at Ser-37 (H2BS36ph), thereby blocking expression of pro-adipogenetic genes. Post-translationally, crotonylation (Kcr) is specifically present in male germ cells and marks testis-specific genes in post-meiotic cells, including X-linked genes that escape sex chromosome inactivation in haploid cells. Crotonylation marks active promoters and enhancers and confers resistance to transcriptional repressors. It is also associated with post-meiotically activated genes on autosomes. Lactylated in macrophages by EP300/P300 by using lactoyl-CoA directly derived from endogenous or exogenous lactate, leading to stimulates gene transcription.

Its subcellular location is the nucleus. It is found in the chromosome. In terms of biological role, core component of nucleosome. Nucleosomes wrap and compact DNA into chromatin, limiting DNA accessibility to the cellular machineries which require DNA as a template. Histones thereby play a central role in transcription regulation, DNA repair, DNA replication and chromosomal stability. DNA accessibility is regulated via a complex set of post-translational modifications of histones, also called histone code, and nucleosome remodeling. Its function is as follows. Has broad antibacterial activity. May contribute to the formation of the functional antimicrobial barrier of the colonic epithelium, and to the bactericidal activity of amniotic fluid. The polypeptide is Histone H2B type 1-J (Homo sapiens (Human)).